The following is a 317-amino-acid chain: Melanocyte-stimulating hormone receptor (317 aa).

At 1–37 (MPVQGSQRRLLGSLNSTPTATPRLGLAANQTGARCLE) the chain is on the extracellular side. Asn-29 carries N-linked (GlcNAc...) asparagine glycosylation. The helical transmembrane segment at 38 to 63 (VSIPDGLFLSLGLVSLVENVLVVVAI) threads the bilayer. Residues 64 to 72 (ARNRNLHSP) lie on the Cytoplasmic side of the membrane. A helical transmembrane segment spans residues 73 to 93 (MYCFICCLALSDLLVSGSNML). At 94-118 (DTAVILLLEAGALAARAAVVQQLDN) the chain is on the extracellular side. The chain crosses the membrane as a helical span at residues 119–140 (VIDVITCSSMLSSLCFLGAIAV). Topologically, residues 141-163 (DRYISIFYALRYHSIVTLRRARR) are cytoplasmic. A helical membrane pass occupies residues 164-183 (VVAAIWVASILFSTLFIAYC). At 184-191 (DHAAVLLC) the chain is on the extracellular side. A helical membrane pass occupies residues 192 to 211 (LVVFFLAMLVLMAVLYVHML). Residues 212–240 (ARACQHAQGIAQLHKRQRPAHQGVGLKGA) are Cytoplasmic-facing. A helical transmembrane segment spans residues 241-266 (ATLTILLGIFFLCWGPFFLHLTLIVL). The Extracellular portion of the chain corresponds to 267-279 (CPQHPTCSCIFKN). The chain crosses the membrane as a helical span at residues 280-300 (FNLFLTLIICNAIIDPLIYAF). Residues 301–317 (RSQELRRTLKKVLLCSW) lie on the Cytoplasmic side of the membrane. Cys-315 carries the S-palmitoyl cysteine lipid modification.

Belongs to the G-protein coupled receptor 1 family. As to quaternary structure, interacts with MGRN1, but does not undergo MGRN1-mediated ubiquitination; this interaction competes with GNAS-binding and thus inhibits agonist-induced cAMP production. Interacts with OPN3; the interaction results in a decrease in MC1R-mediated cAMP signaling and ultimately a decrease in melanin production in melanocytes.

The protein localises to the cell membrane. Receptor for MSH (alpha, beta and gamma) and ACTH. The activity of this receptor is mediated by G proteins which activate adenylate cyclase. Mediates melanogenesis, the production of eumelanin (black/brown) and phaeomelanin (red/yellow), via regulation of cAMP signaling in melanocytes. This chain is Melanocyte-stimulating hormone receptor (MC1R), found in Trachypithecus francoisi (Francois' leaf monkey).